The sequence spans 137 residues: Putative pre-16S rRNA nuclease (137 aa).

The protein belongs to the YqgF nuclease family.

Its subcellular location is the cytoplasm. In terms of biological role, could be a nuclease involved in processing of the 5'-end of pre-16S rRNA. The protein is Putative pre-16S rRNA nuclease of Clostridium botulinum (strain 657 / Type Ba4).